The following is a 288-amino-acid chain: Light-independent protochlorophyllide reductase iron-sulfur ATP-binding protein (288 aa).

ATP contacts are provided by residues Gly-10–Thr-15 and Lys-39. Residue Ser-14 coordinates Mg(2+). 2 residues coordinate [4Fe-4S] cluster: Cys-95 and Cys-129. Asn-180 to Arg-181 is an ATP binding site.

The protein belongs to the NifH/BchL/ChlL family. Homodimer. Protochlorophyllide reductase is composed of three subunits; ChlL, ChlN and ChlB. It depends on [4Fe-4S] cluster as a cofactor.

The enzyme catalyses chlorophyllide a + oxidized 2[4Fe-4S]-[ferredoxin] + 2 ADP + 2 phosphate = protochlorophyllide a + reduced 2[4Fe-4S]-[ferredoxin] + 2 ATP + 2 H2O. The protein operates within porphyrin-containing compound metabolism; chlorophyll biosynthesis (light-independent). Its function is as follows. Component of the dark-operative protochlorophyllide reductase (DPOR) that uses Mg-ATP and reduced ferredoxin to reduce ring D of protochlorophyllide (Pchlide) to form chlorophyllide a (Chlide). This reaction is light-independent. The L component serves as a unique electron donor to the NB-component of the complex, and binds Mg-ATP. The polypeptide is Light-independent protochlorophyllide reductase iron-sulfur ATP-binding protein (Nostoc sp. (strain PCC 7120 / SAG 25.82 / UTEX 2576)).